Reading from the N-terminus, the 242-residue chain is MNENLENFSTIDLLNELKRRYACLSKPDGRYIFLGAPGSGKGTQSLNLKKSHCYCHLSTGDLLREAAEKKTELGLKIKNIINEGKLVDDQMVLSLVDEKLKTPQCKKGFILDGYPRNVKQAEDLNKLLQKNQTKLDGVFYFNVPDEVLVNRISGRLIHKPSGRIYHKIFNPPKVPFRDDVTNEPLIQREDDNEDVLKKRLTVFKSETSPLISYYKNKNLLINLDATQPANDLEKKISQHIDG.

ATP is bound by residues Gly38–Thr43 and Gly42. The interval Ser58 to Val87 is NMP. AMP contacts are provided by residues Thr59, Arg64, Lys85–Val87, Gly113, Gly113–Arg116, and Gln120. Positions Gly154–Asp191 are LID. ATP contacts are provided by Arg155 and Tyr165. Arg199 contributes to the AMP binding site. Ala229 serves as a coordination point for ATP.

Belongs to the adenylate kinase family.

The protein localises to the cytoplasm. The catalysed reaction is AMP + ATP = 2 ADP. Inhibited by the dinucleoside pentaphosphate compound P1,P5-di(adenosine-5') pentaphosphate (AP5A). Catalyzes the reversible transfer of the terminal phosphate group between ATP and AMP. Has very low activity with CTP, GTP, ITP and UTP and no activity with GMP, CMP, UMP or IMP in vitro. The polypeptide is Adenylate kinase 1 (Plasmodium falciparum (isolate 3D7)).